A 362-amino-acid polypeptide reads, in one-letter code: Heat-inducible transcription repressor HrcA (362 aa).

Belongs to the HrcA family.

In terms of biological role, negative regulator of class I heat shock genes (grpE-dnaK-dnaJ and groELS operons). Prevents heat-shock induction of these operons. The chain is Heat-inducible transcription repressor HrcA from Bradyrhizobium sp. (strain BTAi1 / ATCC BAA-1182).